The sequence spans 115 residues: Iron-sulfur cluster insertion protein ErpA (115 aa).

Iron-sulfur cluster contacts are provided by Cys-42, Cys-106, and Cys-108.

It belongs to the HesB/IscA family. As to quaternary structure, homodimer. Iron-sulfur cluster serves as cofactor.

Its function is as follows. Required for insertion of 4Fe-4S clusters for at least IspG. The chain is Iron-sulfur cluster insertion protein ErpA from Baumannia cicadellinicola subsp. Homalodisca coagulata.